The primary structure comprises 482 residues: uncharacterized protein (482 aa).

Composition is skewed to low complexity over residues 24 to 86 (SPNS…AQQQ) and 312 to 339 (TDSL…SQSI). Disordered regions lie at residues 24 to 88 (SPNS…QQHY) and 307 to 376 (LHSQ…LIGK). Acidic residues predominate over residues 342-363 (EEEEDGGEDEEEEGGEDNDNES).

This is an uncharacterized protein from Dictyostelium discoideum (Social amoeba).